A 300-amino-acid chain; its full sequence is Kynurenine formamidase (300 aa).

Residues 86 to 90 carry the HGGXW motif; it reads HGGYW. Serine 157 (nucleophile) is an active-site residue. Residues aspartate 244 and histidine 276 contribute to the active site.

It belongs to the kynurenine formamidase family. As to quaternary structure, homodimer.

The catalysed reaction is N-formyl-L-kynurenine + H2O = L-kynurenine + formate + H(+). It participates in amino-acid degradation; L-tryptophan degradation via kynurenine pathway; L-kynurenine from L-tryptophan: step 2/2. Functionally, catalyzes the hydrolysis of N-formyl-L-kynurenine to L-kynurenine, the second step in the kynurenine pathway of tryptophan degradation. Required for elimination of toxic metabolites. The sequence is that of Kynurenine formamidase (KFase) from Drosophila melanogaster (Fruit fly).